The following is a 599-amino-acid chain: Elongation factor 4 (599 aa).

Positions 4 to 186 (ENIRNFSIIA…EIVKKIPPPE (183 aa)) constitute a tr-type G domain. GTP-binding positions include 16-21 (DHGKST) and 133-136 (NKID).

The protein belongs to the TRAFAC class translation factor GTPase superfamily. Classic translation factor GTPase family. LepA subfamily.

It is found in the cell inner membrane. It catalyses the reaction GTP + H2O = GDP + phosphate + H(+). Required for accurate and efficient protein synthesis under certain stress conditions. May act as a fidelity factor of the translation reaction, by catalyzing a one-codon backward translocation of tRNAs on improperly translocated ribosomes. Back-translocation proceeds from a post-translocation (POST) complex to a pre-translocation (PRE) complex, thus giving elongation factor G a second chance to translocate the tRNAs correctly. Binds to ribosomes in a GTP-dependent manner. The polypeptide is Elongation factor 4 (Geobacter metallireducens (strain ATCC 53774 / DSM 7210 / GS-15)).